The chain runs to 148 residues: Small ribosomal subunit protein bS6 (148 aa).

The disordered stretch occupies residues 96–148; the sequence is HEEGQSAMLTRRDDRRERDGDDRPRRREGGFDRGDRGDRSPRRPRDNEAGEGA.

This sequence belongs to the bacterial ribosomal protein bS6 family.

In terms of biological role, binds together with bS18 to 16S ribosomal RNA. This chain is Small ribosomal subunit protein bS6, found in Brucella suis (strain ATCC 23445 / NCTC 10510).